A 472-amino-acid chain; its full sequence is Ribosomal protein uS12 methylthiotransferase RimO (472 aa).

The region spanning 33–143 (NRIGFVSLGC…VLKHVHKYVP (111 aa)) is the MTTase N-terminal domain. 6 residues coordinate [4Fe-4S] cluster: Cys-42, Cys-78, Cys-107, Cys-175, Cys-179, and Cys-182. The Radical SAM core domain occupies 161-398 (LTPKHYAYLK…MELQAEISAE (238 aa)). The region spanning 401–467 (ARFVGRTLDI…EHDLWAEVVD (67 aa)) is the TRAM domain.

It belongs to the methylthiotransferase family. RimO subfamily. Requires [4Fe-4S] cluster as cofactor.

It localises to the cytoplasm. It catalyses the reaction L-aspartate(89)-[ribosomal protein uS12]-hydrogen + (sulfur carrier)-SH + AH2 + 2 S-adenosyl-L-methionine = 3-methylsulfanyl-L-aspartate(89)-[ribosomal protein uS12]-hydrogen + (sulfur carrier)-H + 5'-deoxyadenosine + L-methionine + A + S-adenosyl-L-homocysteine + 2 H(+). In terms of biological role, catalyzes the methylthiolation of an aspartic acid residue of ribosomal protein uS12. The polypeptide is Ribosomal protein uS12 methylthiotransferase RimO (Shewanella putrefaciens (strain CN-32 / ATCC BAA-453)).